A 440-amino-acid polypeptide reads, in one-letter code: L-seryl-tRNA(Sec) selenium transferase (440 aa).

An N6-(pyridoxal phosphate)lysine modification is found at lysine 282.

It belongs to the SelA family. Pyridoxal 5'-phosphate is required as a cofactor.

Its subcellular location is the cytoplasm. It carries out the reaction L-seryl-tRNA(Sec) + selenophosphate + H(+) = L-selenocysteinyl-tRNA(Sec) + phosphate. Its pathway is aminoacyl-tRNA biosynthesis; selenocysteinyl-tRNA(Sec) biosynthesis; selenocysteinyl-tRNA(Sec) from L-seryl-tRNA(Sec) (bacterial route): step 1/1. In terms of biological role, converts seryl-tRNA(Sec) to selenocysteinyl-tRNA(Sec) required for selenoprotein biosynthesis. In Campylobacter jejuni subsp. jejuni serotype O:6 (strain 81116 / NCTC 11828), this protein is L-seryl-tRNA(Sec) selenium transferase.